The following is an 82-amino-acid chain: RNA-binding protein Hfq (82 aa).

Residues 10 to 70 (DIFLNGARKN…LSTITPSKAI (61 aa)) enclose the Sm domain.

Belongs to the Hfq family. In terms of assembly, homohexamer.

Its function is as follows. RNA chaperone that binds small regulatory RNA (sRNAs) and mRNAs to facilitate mRNA translational regulation in response to envelope stress, environmental stress and changes in metabolite concentrations. Also binds with high specificity to tRNAs. The sequence is that of RNA-binding protein Hfq from Clostridium kluyveri (strain NBRC 12016).